A 161-amino-acid polypeptide reads, in one-letter code: 2-C-methyl-D-erythritol 2,4-cyclodiphosphate synthase (161 aa).

A divalent metal cation is bound by residues aspartate 9 and histidine 11. 4-CDP-2-C-methyl-D-erythritol 2-phosphate is bound by residues 9 to 11 (DFH) and 37 to 38 (HS). Histidine 45 is a binding site for a divalent metal cation. 4-CDP-2-C-methyl-D-erythritol 2-phosphate is bound by residues 59-61 (DIG), 64-68 (FPDTD), 135-138 (TTTE), and arginine 145.

It belongs to the IspF family. As to quaternary structure, homotrimer. It depends on a divalent metal cation as a cofactor.

It catalyses the reaction 4-CDP-2-C-methyl-D-erythritol 2-phosphate = 2-C-methyl-D-erythritol 2,4-cyclic diphosphate + CMP. Its pathway is isoprenoid biosynthesis; isopentenyl diphosphate biosynthesis via DXP pathway; isopentenyl diphosphate from 1-deoxy-D-xylulose 5-phosphate: step 4/6. Involved in the biosynthesis of isopentenyl diphosphate (IPP) and dimethylallyl diphosphate (DMAPP), two major building blocks of isoprenoid compounds. Catalyzes the conversion of 4-diphosphocytidyl-2-C-methyl-D-erythritol 2-phosphate (CDP-ME2P) to 2-C-methyl-D-erythritol 2,4-cyclodiphosphate (ME-CPP) with a corresponding release of cytidine 5-monophosphate (CMP). In Leptospira borgpetersenii serovar Hardjo-bovis (strain JB197), this protein is 2-C-methyl-D-erythritol 2,4-cyclodiphosphate synthase.